We begin with the raw amino-acid sequence, 537 residues long: Phosphoenolpyruvate carboxykinase (ATP) (537 aa).

Residues Arg-64, Tyr-204, and Lys-210 each contribute to the substrate site. Residues Lys-210, His-229, and 245–253 (GLSGTGKTT) contribute to the ATP site. Positions 210 and 229 each coordinate Mn(2+). Asp-266 contributes to the Mn(2+) binding site. ATP-binding positions include Glu-294, Arg-330, 446–447 (RI), and Thr-452. Arg-330 serves as a coordination point for substrate.

It belongs to the phosphoenolpyruvate carboxykinase (ATP) family. In terms of assembly, monomer. Requires Mn(2+) as cofactor.

The protein resides in the cytoplasm. The catalysed reaction is oxaloacetate + ATP = phosphoenolpyruvate + ADP + CO2. It functions in the pathway carbohydrate biosynthesis; gluconeogenesis. Involved in the gluconeogenesis. Catalyzes the conversion of oxaloacetate (OAA) to phosphoenolpyruvate (PEP) through direct phosphoryl transfer between the nucleoside triphosphate and OAA. This is Phosphoenolpyruvate carboxykinase (ATP) from Aliivibrio fischeri (strain ATCC 700601 / ES114) (Vibrio fischeri).